A 280-amino-acid polypeptide reads, in one-letter code: F420-dependent methylenetetrahydromethanopterin dehydrogenase (280 aa).

The protein belongs to the MTD family.

The enzyme catalyses 5,10-methylenetetrahydromethanopterin + oxidized coenzyme F420-(gamma-L-Glu)(n) + 2 H(+) = 5,10-methenyl-5,6,7,8-tetrahydromethanopterin + reduced coenzyme F420-(gamma-L-Glu)(n). Its pathway is one-carbon metabolism; methanogenesis from CO(2); 5,10-methylene-5,6,7,8-tetrahydromethanopterin from 5,10-methenyl-5,6,7,8-tetrahydromethanopterin (coenzyme F420 route): step 1/1. Its function is as follows. Catalyzes the reversible reduction of methenyl-H(4)MPT(+) to methylene-H(4)MPT. The sequence is that of F420-dependent methylenetetrahydromethanopterin dehydrogenase from Methanosphaerula palustris (strain ATCC BAA-1556 / DSM 19958 / E1-9c).